The sequence spans 259 residues: Cysteine protease IpaJ (259 aa).

Residues Cys-64, His-206, and Asp-218 contribute to the active site.

The protein resides in the secreted. It is found in the host cytoplasm. Virulence factor that eliminates N-myristoyl protein modifications in infected host cells. Acts as a cysteine protease that cleaves the peptide bond between N-myristoylated Gly-2 and Asn-3 of human ARF1, leading to the elimination of the myristoyl group and alteration of protein trafficking in host cell. Could also cleave an array of N-myristoylated host proteins involved in cellular growth, signal transduction, autophagasome maturation and organelle function. This is Cysteine protease IpaJ (ipaJ) from Shigella flexneri.